Consider the following 298-residue polypeptide: Cholesterol 25-hydroxylase (298 aa).

A glycan (N-linked (GlcNAc...) asparagine) is linked at asparagine 5. 3 helical membrane-spanning segments follow: residues 38 to 58 (FFPV…FVVL), 84 to 104 (LLPC…PVTL), and 124 to 144 (LLSH…AWHL). Positions 128-263 (VLICLLLFDT…FTHWDKMLGT (136 aa)) constitute a Fatty acid hydroxylase domain. The Histidine box-1 signature appears at 142–146 (WHLLH). The Histidine box-2 signature appears at 157–161 (HKVHH). N-linked (GlcNAc...) asparagine glycosylation occurs at asparagine 163. 2 helical membrane passes run 167-187 (FALA…FFDV) and 190-210 (VAML…NIWL). Residues 238 to 244 (HHDLHHS) carry the Histidine box-3 motif.

This sequence belongs to the sterol desaturase family. Fe cation is required as a cofactor. Post-translationally, N-glycosylated. As to expression, expressed in testicular macrophages at all stages, with the highest level in 10 day old animals.

The protein localises to the endoplasmic reticulum membrane. The enzyme catalyses cholesterol + AH2 + O2 = 25-hydroxycholesterol + A + H2O. It catalyses the reaction cholesterol + NADPH + O2 + H(+) = 25-hydroxycholesterol + NADP(+) + H2O. In terms of biological role, catalyzes the formation of 25-hydroxycholesterol from cholesterol, leading to repress cholesterol biosynthetic enzymes. Plays a key role in cell positioning and movement in lymphoid tissues: 25-hydroxycholesterol is an intermediate in biosynthesis of 7-alpha,25-dihydroxycholesterol (7-alpha,25-OHC), an oxysterol that acts as a ligand for the G protein-coupled receptor GPR183/EBI2, a chemotactic receptor for a number of lymphoid cells. May play an important role in regulating lipid metabolism by synthesizing a corepressor that blocks sterol regulatory element binding protein (SREBP) processing. In testis, production of 25-hydroxycholesterol by macrophages plays a role in Leydig cell differentiation. Required to restrain inflammation in macrophages: production of 25-hydroxycholesterol protects macrophages from cholesterol overload, thereby preventing mitochondrial DNA release and subsequent activation of the AIM2 inflammasome. Interferon-stimulated gene which has broad antiviral activities against a wide range of enveloped viruses. Catalyzes the formation of 25-hydroxycholesterol from cholesterol, leading to repress cholesterol biosynthetic enzymes. Plays a key role in cell positioning and movement in lymphoid tissues: 25-hydroxycholesterol is an intermediate in biosynthesis of 7-alpha,25-dihydroxycholesterol (7-alpha,25-OHC), an oxysterol that acts as a ligand for the G protein-coupled receptor GPR183/EBI2, a chemotactic receptor for a number of lymphoid cells. May play an important role in regulating lipid metabolism by synthesizing a corepressor that blocks sterol regulatory element binding protein (SREBP) processing. As an interferon-stimulated gene, has broad antiviral activities against a wide range of enveloped viruses. Its product, 25-hydroxycholesterol, activates the ER-localized enzyme ACAT to induce internalization of accessible cholesterol on the plasma membrane and restricts virus-host membranes fusion which inhibits virus replication. In testis, production of 25-hydroxycholesterol by macrophages plays a role in Leydig cell differentiation. The chain is Cholesterol 25-hydroxylase from Rattus norvegicus (Rat).